The following is a 361-amino-acid chain: tRNA-specific 2-thiouridylase MnmA (361 aa).

ATP contacts are provided by residues 6–13 and L32; that span reads AMSGGVDS. C99 acts as the Nucleophile in catalysis. C99 and C196 are disulfide-bonded. ATP is bound at residue G123. The tract at residues 145–147 is interaction with tRNA; that stretch reads RDQ. Residue C196 is the Cysteine persulfide intermediate of the active site.

It belongs to the MnmA/TRMU family.

The protein resides in the cytoplasm. The catalysed reaction is S-sulfanyl-L-cysteinyl-[protein] + uridine(34) in tRNA + AH2 + ATP = 2-thiouridine(34) in tRNA + L-cysteinyl-[protein] + A + AMP + diphosphate + H(+). Catalyzes the 2-thiolation of uridine at the wobble position (U34) of tRNA, leading to the formation of s(2)U34. This chain is tRNA-specific 2-thiouridylase MnmA, found in Gluconobacter oxydans (strain 621H) (Gluconobacter suboxydans).